We begin with the raw amino-acid sequence, 159 residues long: Thioredoxin O2, mitochondrial (159 aa).

Serine 40 is subject to Phosphoserine. One can recognise a Thioredoxin domain in the interval 43–159 (FAEGDRSSFV…LKSVMEQLYK (117 aa)). Catalysis depends on nucleophile residues cysteine 83 and cysteine 86. Cysteine 83 and cysteine 86 form a disulfide bridge.

The protein belongs to the thioredoxin family. Plant O-type subfamily.

The protein localises to the mitochondrion. Thiol-disulfide oxidoreductase that may participate in various redox reactions. Possesses insulin disulfide bonds reducing activity. Reduced by thioredoxin reductases NTRA and NTRB. In Arabidopsis thaliana (Mouse-ear cress), this protein is Thioredoxin O2, mitochondrial.